The following is an 898-amino-acid chain: Pyruvate, phosphate dikinase (898 aa).

The tract at residues 1–355 is N-terminal; the sequence is MAKWVYTFGA…LWMLQTRSGK (355 aa). Residue R96 coordinates ATP. The segment at 356–412 is linker 1; sequence RTAKSALKIAVDMAEEGLISKEEAVARIDPASLDQLLHPTIDPHARRDIIGSGLPAS. The segment at 413–511 is central; that stretch reads PGAATGEIVF…TLRKGDVITI (99 aa). The residue at position 466 (T466) is a Phosphothreonine; by PDRP1. H468 serves as the catalytic Tele-phosphohistidine intermediate. The tract at residues 512-546 is linker 2; the sequence is DGSSGQVLKGEIPMLQPELSGDFGKIMQWADASRR. The segment at 547 to 898 is C-terminal; sequence MTVRTNAETP…VAEVQALAAS (352 aa). Substrate is bound by residues R574, R630, E758, G779, T780, N781, and D782. E758 provides a ligand contact to Mg(2+). Residue D782 coordinates Mg(2+). The Proton donor role is filled by C844.

Belongs to the PEP-utilizing enzyme family. In terms of assembly, homodimer. The cofactor is Mg(2+). Phosphorylation of Thr-466 in the dark inactivates the enzyme. Dephosphorylation upon light stimulation reactivates the enzyme.

It catalyses the reaction pyruvate + phosphate + ATP = phosphoenolpyruvate + AMP + diphosphate + H(+). Its activity is regulated as follows. Activated by light-induced dephosphorylation. Inhibited by dark-induced phosphorylation. Both reactions are catalyzed by PDRP1. Its function is as follows. Catalyzes the reversible phosphorylation of pyruvate and phosphate. This Rhizobium meliloti (strain 1021) (Ensifer meliloti) protein is Pyruvate, phosphate dikinase (ppdK).